The following is a 119-amino-acid chain: uncharacterized protein (119 aa).

This is an uncharacterized protein from Saccharomyces cerevisiae (strain ATCC 204508 / S288c) (Baker's yeast).